The following is a 331-amino-acid chain: Dioxygenase swnH2 (331 aa).

Polar residues predominate over residues 1-11 (MINSDAQSAQK). Positions 1–31 (MINSDAQSAQKQVEVEKPDEKYSAPRLLPPI) are disordered. Residues 13–23 (VEVEKPDEKYS) are compositionally biased toward basic and acidic residues. H173, D175, and H250 together coordinate Fe cation.

It belongs to the PhyH family. Homodimer. Fe cation serves as cofactor.

It functions in the pathway mycotoxin biosynthesis. Dioxygenase; part of the gene cluster that mediates the biosynthesis of swainsonine (SW), a cytotoxic fungal alkaloid and a potential cancer therapy drug. Swainsonine production occurs via a multibranched pathway and is dispensable for fungal colonization of plants and infection of insect hosts. The first step of swainsonine biosynthesis is the production of the precursor pipecolic acid (PA) via conversion of L-lysine (Lys) to 1-piperideine-6-carboxylate (P6C) by the aminotransferase swnA, the latter being further reduced to PA by the reductase swnR. PA can be converted from lysine by both the SW biosynthetic cluster and the unclustered genes such as lysine cyclodeaminase. The PKS-NRPS hybrid synthetase swnK uptakes and condensates PA and malonyl-CoA with and without skipping of the ketoreductase (KR) domain in order to produce 3 intermediates, 1-oxoindolizidine, (1S)-1-hydroxyindolizin, and (1R)-1-hydroxyindolizine; with the transisomer (1S)-1-hydroxyindolizin being predominant. The terminal thioester reductase (TE) domain of swnK is involved in reduction of the thioester bond to release the intermediate aldehydes. The oxidoreductase swnN could contribute to the reduction of 1-oxoindolizidine to (1S)-1-hydroxyindolizin and (1R)-1-hydroxyindolizine, contributing to the major route of SW production. The dioxygenase swnH2 would be responsible for the oxidization of (1R)-1-hydroxyindolizine into (1R,2S)-1,2-dihydroxyindolizine and of (1S)-1-hydroxyindolizin to yield both (1R,2S)-1,2-dihydroxyindolizine and (1S,2S)-1,2-dihydroxyindolizine. The dioxygenase swnH1 then performs the conversion of the 1,2-dihydroxyindolizine epimers to SW. The polypeptide is Dioxygenase swnH2 (Metarhizium robertsii (strain ARSEF 23 / ATCC MYA-3075) (Metarhizium anisopliae (strain ARSEF 23))).